The sequence spans 512 residues: PTS system mannitol-specific EIICB component (512 aa).

The Cytoplasmic portion of the chain corresponds to 1–28; the sequence is MSQTEEKKGIGRRVQAFGSFLSSMIMPN. Residues 17–349 form the PTS EIIC type-2 domain; that stretch reads FGSFLSSMIM…MKFTREPKQD (333 aa). A helical transmembrane segment spans residues 29 to 50; that stretch reads IGAFIAWGFIAAIFIDNGWLPN. The Extracellular segment spans residues 51 to 54; it reads KDLA. The helical transmembrane segment at 55–75 threads the bilayer; that stretch reads TLAGPMITYLIPLLIAFSGGR. Residues 76-139 lie on the Cytoplasmic side of the membrane; it reads LIYDLRGGII…QGFEMLFNNF (64 aa). Residues 140-161 form a helical membrane-spanning segment; that stretch reads SAGILGFIMTIAGFKILAPLMK. The Extracellular segment spans residues 162 to 170; sequence FIMHILSVA. A helical transmembrane segment spans residues 171–191; that stretch reads VEALVHAHLLPLVSILVEPAK. Over 192-278 the chain is Cytoplasmic; sequence IVFLNNAINH…VLMRPLLFIA (87 aa). The chain crosses the membrane as a helical span at residues 279–298; it reads VILGGMTGVATYQATGFGFK. Over 299–318 the chain is Extracellular; the sequence is SPASPGSFIVYCLNAPRGEF. A helical transmembrane segment spans residues 319–340; that stretch reads LHMLLGVFLAALVSFVVAALIM. The Cytoplasmic portion of the chain corresponds to 341-512; it reads KFTREPKQDL…LNNLKKDDQA (172 aa). Residues 355-402 form a disordered region; it reads AQMENTKGKKSSVASKLVSSDKNVNTEENASGNVSETSSSDDDPEALL. Residues 365–376 are compositionally biased toward low complexity; it reads SSVASKLVSSDK. A compositionally biased stretch (polar residues) spans 380–392; the sequence is TEENASGNVSETS. One can recognise a PTS EIIB type-2 domain in the interval 419–512; it reads NHVIFACDAG…LNNLKKDDQA (94 aa). The active-site Phosphocysteine intermediate; for EIIB activity is cysteine 425. Residue cysteine 425 is modified to Phosphocysteine; by EIIA.

In terms of assembly, homodimer.

The protein localises to the cell membrane. The enzyme catalyses D-mannitol(out) + N(pros)-phospho-L-histidyl-[protein] = D-mannitol 1-phosphate(in) + L-histidyl-[protein]. Functionally, the phosphoenolpyruvate-dependent sugar phosphotransferase system (sugar PTS), a major carbohydrate active transport system, catalyzes the phosphorylation of incoming sugar substrates concomitantly with their translocation across the cell membrane. The enzyme II CmtAB PTS system is involved in D-mannitol transport. The chain is PTS system mannitol-specific EIICB component (mtlA) from Staphylococcus aureus (strain Mu50 / ATCC 700699).